Reading from the N-terminus, the 435-residue chain is NADH-quinone oxidoreductase subunit D (435 aa).

The protein belongs to the complex I 49 kDa subunit family. NDH-1 is composed of 14 different subunits. Subunits NuoB, C, D, E, F, and G constitute the peripheral sector of the complex.

The protein localises to the cell inner membrane. It catalyses the reaction a quinone + NADH + 5 H(+)(in) = a quinol + NAD(+) + 4 H(+)(out). Its function is as follows. NDH-1 shuttles electrons from NADH, via FMN and iron-sulfur (Fe-S) centers, to quinones in the respiratory chain. The immediate electron acceptor for the enzyme in this species is believed to be ubiquinone. Couples the redox reaction to proton translocation (for every two electrons transferred, four hydrogen ions are translocated across the cytoplasmic membrane), and thus conserves the redox energy in a proton gradient. The polypeptide is NADH-quinone oxidoreductase subunit D (Xanthomonas campestris pv. campestris (strain 8004)).